The sequence spans 107 residues: Early E3A 12.5 kDa protein (107 aa).

The protein belongs to the adenoviridae E3A-2 family.

This Homo sapiens (Human) protein is Early E3A 12.5 kDa protein.